The chain runs to 553 residues: CTP synthase (553 aa).

Positions 1–275 are amidoligase domain; it reads MPTETEYDPS…DQYVMEQFDM (275 aa). CTP is bound at residue serine 24. Serine 24 contacts UTP. Residue 25 to 30 participates in ATP binding; that stretch reads GLGKGI. An L-glutamine-binding site is contributed by tyrosine 65. An ATP-binding site is contributed by aspartate 82. Residues aspartate 82 and glutamate 150 each contribute to the Mg(2+) site. CTP is bound by residues 157–159, 196–201, and lysine 232; these read DIE and KTKPTQ. Residues 196–201 and lysine 232 contribute to the UTP site; that span reads KTKPTQ. Positions 308-540 constitute a Glutamine amidotransferase type-1 domain; it reads KYALEDAYMS…LDAVLERADV (233 aa). Glycine 362 is an L-glutamine binding site. Catalysis depends on cysteine 389, which acts as the Nucleophile; for glutamine hydrolysis. Residues 390-393, glutamate 413, and arginine 470 each bind L-glutamine; that span reads LGFQ. Catalysis depends on residues histidine 513 and glutamate 515.

The protein belongs to the CTP synthase family. As to quaternary structure, homotetramer.

It carries out the reaction UTP + L-glutamine + ATP + H2O = CTP + L-glutamate + ADP + phosphate + 2 H(+). The catalysed reaction is L-glutamine + H2O = L-glutamate + NH4(+). The enzyme catalyses UTP + NH4(+) + ATP = CTP + ADP + phosphate + 2 H(+). The protein operates within pyrimidine metabolism; CTP biosynthesis via de novo pathway; CTP from UDP: step 2/2. Its activity is regulated as follows. Allosterically activated by GTP, when glutamine is the substrate; GTP has no effect on the reaction when ammonia is the substrate. The allosteric effector GTP functions by stabilizing the protein conformation that binds the tetrahedral intermediate(s) formed during glutamine hydrolysis. Inhibited by the product CTP, via allosteric rather than competitive inhibition. Its function is as follows. Catalyzes the ATP-dependent amination of UTP to CTP with either L-glutamine or ammonia as the source of nitrogen. Regulates intracellular CTP levels through interactions with the four ribonucleotide triphosphates. This Halobacterium salinarum (strain ATCC 29341 / DSM 671 / R1) protein is CTP synthase.